We begin with the raw amino-acid sequence, 325 residues long: Phospholipid phosphatase-related protein type 1 (325 aa).

N-linked (GlcNAc...) asparagine glycosylation is present at N5. The next 3 membrane-spanning stretches (helical) occupy residues 13–33 (IIPCFIFVELVIMAGTVLLAY), 67–87 (FITPLVLYCVLAATPTAIIFI), and 127–147 (FTGVFAFGLFATDIFVNAGQV). N163 carries an N-linked (GlcNAc...) asparagine glycan. The next 3 membrane-spanning stretches (helical) occupy residues 201-218 (AALSIYSALYATMYITST), 230-247 (VLCLGTLCTAFLTGLNRV), and 257-277 (VIAGFILGTAVALFLGMCVVH). At S307 the chain carries Phosphoserine. An N-linked (GlcNAc...) asparagine glycan is attached at N316.

The protein belongs to the PA-phosphatase related phosphoesterase family.

It localises to the cell membrane. The protein localises to the cell projection. The protein resides in the neuron projection. May play a role in neurite outgrowth and neurogenesis. The chain is Phospholipid phosphatase-related protein type 1 from Homo sapiens (Human).